Here is a 210-residue protein sequence, read N- to C-terminus: Uridine kinase (210 aa).

12–19 contacts ATP; it reads GGSGSGKT.

The protein belongs to the uridine kinase family.

It localises to the cytoplasm. It catalyses the reaction uridine + ATP = UMP + ADP + H(+). The enzyme catalyses cytidine + ATP = CMP + ADP + H(+). Its pathway is pyrimidine metabolism; CTP biosynthesis via salvage pathway; CTP from cytidine: step 1/3. It participates in pyrimidine metabolism; UMP biosynthesis via salvage pathway; UMP from uridine: step 1/1. The sequence is that of Uridine kinase from Leuconostoc citreum (strain KM20).